A 120-amino-acid chain; its full sequence is Internal scaffolding protein B (120 aa).

Polar residues predominate over residues 1-23 (MEQLTKNQAVATSQEAVQNQNEP). The segment at 1 to 64 (MEQLTKNQAV…PDIEAERKKR (64 aa)) is disordered. 2 stretches are compositionally biased toward basic and acidic residues: residues 24–36 (QLRDENAHNDKSV) and 48–64 (LRRDAVQPDIEAERKKR).

Belongs to the microviridae B protein family. As to quaternary structure, component of the procapsid complex composed of 60 copies of the internally located B, 240 copies of the external scaffolding protein D, 60 copies of each of the viral structural proteins F and G proteins, and 12 copies of H. Post-translationally, the proteolytic cleavage of the internal scaffolding protein B releases the scaffold protein in order to continue virion assembly.

The protein localises to the host cytoplasm. Its function is as follows. Participates in the assembly of the viral procapsid in the cytoplasm. Forms first a 12S pre-assembly complex with protein H, and F and G pentamers, then twelve 12S complexes are joined by the D protein to form the procapsid. Internal scaffold protein B is released from the procapsid upon genome packaging. Autoproteolytic activity cleaves protein B and probably facilitates its removal through the pores of the procapsid. The chain is Internal scaffolding protein B (B) from Enterobacteria phage phiX174 (Isolate Sanger).